Reading from the N-terminus, the 319-residue chain is METRNIFSWIKEQITRSISVSLMIYIITRTAVSNAYPIFAQQGYENPREATGRIVCANCHLANKPVDIEVPQAVLPDTVFEAVVRIPYDKQLKQVLANGKKGGLNVGAVLILPEGFELAPPDRISPEIKEKIGNLSFQSYRPNKKNILVIGPIPGQKYSEITFPILSPDPATKKDVHFLKYPIYVGGNRGRGQIYPDGSKSNNTVYNATGAGIVSKIIRKEKGGYEITITDTDGRQVVDIIPPGPELLVSEGEYIKLDQPLTSNPNVGGFGQGDAEIVLQDPLRVQGLLFFLASVILAQIFLVLKKKQFEKVQLAEMNF.

The N-terminal stretch at 1–35 (METRNIFSWIKEQITRSISVSLMIYIITRTAVSNA) is a signal peptide. Tyr36, Cys56, Cys59, and His60 together coordinate heme. Residues 285–305 (VQGLLFFLASVILAQIFLVLK) form a helical membrane-spanning segment.

Belongs to the cytochrome f family. As to quaternary structure, the 4 large subunits of the cytochrome b6-f complex are cytochrome b6, subunit IV (17 kDa polypeptide, petD), cytochrome f and the Rieske protein, while the 4 small subunits are PetG, PetL, PetM and PetN. The complex functions as a dimer. Heme serves as cofactor.

It is found in the plastid. The protein resides in the chloroplast thylakoid membrane. Its function is as follows. Component of the cytochrome b6-f complex, which mediates electron transfer between photosystem II (PSII) and photosystem I (PSI), cyclic electron flow around PSI, and state transitions. This Coffea arabica (Arabian coffee) protein is Cytochrome f.